We begin with the raw amino-acid sequence, 217 residues long: Growth factor receptor-bound protein 2 (217 aa).

Position 1 is an N-acetylmethionine (methionine 1). The 58-residue stretch at 1 to 58 (MEAIAKYDFKATADDELSFKRGDILKVLNEECDQNWYKAELNGKDGFIPKNYIEMKPH) folds into the SH3 1 domain. 3 positions are modified to N6-acetyllysine: lysine 6, lysine 50, and lysine 109. The SH2 domain maps to 60–152 (WFFGKIPRAK…NQQIFLRDIE (93 aa)). Lysine 109 is covalently cross-linked (Glycyl lysine isopeptide (Lys-Gly) (interchain with G-Cter in ubiquitin)). The SH3 2 domain occupies 156-215 (QQPTYVQALFDFDPQEDGELGFRRGDFIHVMDNSDPNWWKGACHGQTGMFPRNYVTPVNR). At tyrosine 209 the chain carries Phosphotyrosine. Threonine 211 is subject to Phosphothreonine.

The protein belongs to the GRB2/sem-5/DRK family. As to quaternary structure, homodimer. Associates (via SH2 domain) with activated EGF and PDGF receptors (tyrosine phosphorylated). Interacts with PDGFRA (tyrosine phosphorylated); the interaction may be indirect. Also associates to other cellular Tyr-phosphorylated proteins such as SIT1, IRS1, IRS2, IRS4, SHC and LNK; probably via the concerted action of both its SH2 and SH3 domains. It also seems to interact with RAS in the signaling pathway leading to DNA synthesis. Interacts with SOS1. Forms a complex with MUC1 and SOS1, through interaction of the SH3 domains with SOS1 and the SH2 domain with phosphorylated MUC1. Interacts with phosphorylated MET. Interacts with phosphorylated TOM1L1. Interacts with the phosphorylated C-terminus of SH2B2. Interacts with phosphorylated SIT1, LAX1, LAT, LAT2 and LIME1 upon TCR and/or BCR activation. Interacts with NISCH, PTPNS1 and REPS2. Interacts with syntrophin SNTA1. Interacts (via SH3 domains) with REPS1. Interacts (via SH3 domains) with PIK3C2B. Interacts with CBL and CBLB. Interacts with AJUBA and CLNK. Interacts (via SH2 domain) with TEK/TIE2 (tyrosine phosphorylated). Interacts with SHB, INPP5D/SHIP1, SKAP1 and SKAP2. Interacts with PTPN11. Interacts with PRNP. Interacts with RALGPS1. Interacts with HCST. Interacts with KDR. Interacts with FLT1 (tyrosine-phosphorylated). Interacts with GAPT and PTPRE. Interacts (via SH2 domain) with KIF26A. Interacts (via SH3 2) with GAB2. Interacts with ADAM15. Interacts with THEMIS2. Interacts (via SH2 domain) with AXL (phosphorylated). Interacts (via SH2 domain) with KIT (phosphorylated). Interacts with PTPRJ and BCR. Interacts with PTPN23. Interacts with FLT4 (tyrosine phosphorylated). Interacts with EPHB1 and SHC1; activates the MAPK/ERK cascade to regulate cell migration. Part of a complex including TNK2, GRB2, LTK and one receptor tyrosine kinase (RTK) such as AXL and PDGFRL, in which GRB2 promotes RTK recruitment by TNK2. Interacts (via SH2 domain) with CSF1R (tyrosine phosphorylated). Interacts with ERBB4. Interacts with NTRK1 (phosphorylated upon ligand-binding). Interacts with PTK2/FAK1 (tyrosine phosphorylated). Interacts with PTK2B/PYK2 (tyrosine phosphorylated). Interacts (via SH3 domains) with GAREM1 isoform 1 (via proline-rich domain and tyrosine phosphorylated); the interaction occurs upon EGF stimulation. Interacts with DAB2. Interacts with TESPA1. Interacts with PLCG1, LAT and THEMIS upon TCR activation in thymocytes; the association is weaker in the absence of TESPA1. Interacts with CD28. Interacts with RAB13; may recruit RAB13 to the leading edge of migrating endothelial cells where it can activate RHOA. Interacts with ASAP3 (phosphorylated form). Interacts (via SH2 domain) with PTPRH (phosphorylated form). Interacts with PTPRO (phosphorylated form). Interacts with PTPRB (phosphorylated form). Interacts (via SH3 domain 2) with PRR14 (via proline-rich region). Interacts with FCRL6 (tyrosine phosphorylated form). Interacts with RHEX (via tyrosine-phosphorylated form). Interacts with DENND2B. Interacts with SPRY2. Interacts with LRRC8A. Interacts with PEAK1. Interacts with CD28. Interacts with FCRL1. Interacts with PCNA. Interacts with CD19. Interacts with BECN1. Interacts with RAD51; the interaction inhibits RAD51 ATPase to stabilize RAD51-DNA complex at stalled replication forks. Interacts with MRE11; this interaction recruits MRE11 to the DNA damage sites. Interacts with RIPK1 ans SQSTM1; these interactions play a critical role in regulating programmed necrosis. Interacts with AGO2; this interaction is important for the formation of a ternary complex containing GRB2, AGO2 and DICER1. Interacts with TIGIT; this interaction inhibits PI3K and MAPK signaling cascades. Interacts with CD226; this interaction leads to activation of VAV1, PI3K and PLCG1. In terms of assembly, interacts (via SH2-domain) with SCIMP; this interaction is dependent on phosphorylation of SCIMP 'Tyr-69'. Interacts with SOS1; this interaction competes with GRB2 to bind SOS1 via its N-terminal SH3 domain. As to quaternary structure, (Microbial infection) Interacts (via SH3 domain) with hepatitis E virus/HEV ORF3 protein. In terms of assembly, (Microbial infection) Interacts with hepatitis C virus/HCV protein NS5A via its SH3 domains. (Microbial infection) Interacts with herpes simplex virus 1 protein UL46. As to quaternary structure, (Microbial infection) Interacts with B19 parvovirus protein 11K. Phosphorylation of Tyr-209 in the C-terminal SH3 domain reduces its binding to SOS1. In terms of processing, ubiquitinated by RNF173, leading to proteasomal degradation and inhibition of the RAF/MEK/ERK pathway. In the nucleus, polyubiquitinated by RBBP6 at Lys-109 at DNA damage sites.

It localises to the nucleus. Its subcellular location is the cytoplasm. The protein resides in the endosome. The protein localises to the golgi apparatus. Its function is as follows. Non-enzymatic adapter protein that plays a pivotal role in precisely regulated signaling cascades from cell surface receptors to cellular responses, including signaling transduction and gene expression. Thus, participates in many biological processes including regulation of innate and adaptive immunity, autophagy, DNA repair or necroptosis. Controls signaling complexes at the T-cell antigen receptor to facilitate the activation, differentiation, and function of T-cells. Mechanistically, engagement of the TCR leads to phosphorylation of the adapter protein LAT, which serves as docking site for GRB2. In turn, GRB2 establishes a a connection with SOS1 that acts as a guanine nucleotide exchange factor and serves as a critical regulator of KRAS/RAF1 leading to MAPKs translocation to the nucleus and activation. Functions also a role in B-cell activation by amplifying Ca(2+) mobilization and activation of the ERK MAP kinase pathway upon recruitment to the phosphorylated B-cell antigen receptor (BCR). Plays a role in switching between autophagy and programmed necrosis upstream of EGFR by interacting with components of necrosomes including RIPK1 and with autophagy regulators SQSTM1 and BECN1. Regulates miRNA biogenesis by forming a functional ternary complex with AGO2 and DICER1. Functions in the replication stress response by protecting DNA at stalled replication forks from MRE11-mediated degradation. Mechanistically, inhibits RAD51 ATPase activity to stabilize RAD51 on stalled replication forks. Additionally, directly recruits and later releases MRE11 at DNA damage sites during the homology-directed repair (HDR) process. In terms of biological role, does not bind to phosphorylated epidermal growth factor receptor (EGFR) but inhibits EGF-induced transactivation of a RAS-responsive element. Acts as a dominant negative protein over GRB2 and by suppressing proliferative signals, may trigger active programmed cell death. Mechanistically, inhibits RAS-ERK signaling and downstream cell proliferation by competing with GRB2 for SOS1 binding and thus by regulating SOS1 membrane recruitment. The chain is Growth factor receptor-bound protein 2 (GRB2) from Homo sapiens (Human).